The following is a 590-amino-acid chain: Aspartate--tRNA(Asp/Asn) ligase (590 aa).

Glu-173 is a binding site for L-aspartate. The segment at 197–200 is aspartate; the sequence is QIFK. Position 219 (Arg-219) interacts with L-aspartate. ATP is bound by residues 219–221 and Gln-228; that span reads RDE. An L-aspartate-binding site is contributed by His-450. Position 484 (Glu-484) interacts with ATP. Residue Arg-491 coordinates L-aspartate. Residue 536-539 coordinates ATP; sequence GLDR.

It belongs to the class-II aminoacyl-tRNA synthetase family. Type 1 subfamily. As to quaternary structure, homodimer.

Its subcellular location is the cytoplasm. The enzyme catalyses tRNA(Asx) + L-aspartate + ATP = L-aspartyl-tRNA(Asx) + AMP + diphosphate. Functionally, aspartyl-tRNA synthetase with relaxed tRNA specificity since it is able to aspartylate not only its cognate tRNA(Asp) but also tRNA(Asn). Reaction proceeds in two steps: L-aspartate is first activated by ATP to form Asp-AMP and then transferred to the acceptor end of tRNA(Asp/Asn). In Coxiella burnetii (strain Dugway 5J108-111), this protein is Aspartate--tRNA(Asp/Asn) ligase.